We begin with the raw amino-acid sequence, 1040 residues long: DNA cross-link repair 1A protein (1040 aa).

A nuclear localization region region spans residues 1–190 (MLEDISEEDI…RAGDHPFSSP (190 aa)). Positions 15–76 (SKRKPKRVDP…LGNAGCQTSV (62 aa)) are disordered. Over residues 53–65 (RAAEAKEVKDHEV) the composition is skewed to basic and acidic residues. The segment at 119–149 (DGYCPNCQMPFSSLIGQTPRWHVFECLDSPP) adopts a UBZ4-type zinc-finger fold. 4 residues coordinate Zn(2+): Cys-122, Cys-125, His-140, and Cys-144. Residues Lys-202, Lys-236, Lys-269, Lys-353, Lys-361, Lys-429, Lys-488, Lys-508, Lys-517, Lys-533, and Lys-536 each participate in a glycyl lysine isopeptide (Lys-Gly) (interchain with G-Cter in SUMO2) cross-link. A nuclear focus formation region spans residues 396 to 614 (LPYDLACTGG…KSLSDLEFDA (219 aa)). Disordered stretches follow at residues 582–602 (GINLNPVPSPNQKRSSQCKRK) and 623–651 (SVELSSERSQRQKKRCRKSNSLQEGACQK). Phosphoserine is present on Ser-590. Residues Lys-668, Lys-670, and Lys-674 each participate in a glycyl lysine isopeptide (Lys-Gly) (interchain with G-Cter in SUMO2) cross-link.

Belongs to the DNA repair metallo-beta-lactamase (DRMBL) family. As to quaternary structure, binds constitutively to TP53BP1. Binds CDC27, which is itself a component of the anaphase promoting complex (APC). Binds PIAS1. As to expression, expressed in brain, heart, kidney, liver, pancreas, placenta and skeletal muscle.

Its subcellular location is the nucleus. It carries out the reaction a beta-lactam + H2O = a substituted beta-amino acid. Beta-lactamase activity is inhibited by sulbactam. In terms of biological role, may be required for DNA interstrand cross-link repair. Also required for checkpoint mediated cell cycle arrest in early prophase in response to mitotic spindle poisons. Possesses beta-lactamase activity, catalyzing the hydrolysis of penicillin G and nitrocefin. Exhibits no activity towards other beta-lactam antibiotic classes including cephalosporins (cefotaxime) and carbapenems (imipenem). This is DNA cross-link repair 1A protein (DCLRE1A) from Homo sapiens (Human).